Reading from the N-terminus, the 846-residue chain is Neurotactin (846 aa).

Residues Met-1–Arg-222 are disordered. Topologically, residues Met-1–Asp-324 are cytoplasmic. Residues Pro-11 to Glu-20 show a composition bias toward low complexity. Over residues Glu-23–Thr-42 the composition is skewed to basic and acidic residues. Thr-28 is subject to Phosphothreonine; by PKC. A Phosphothreonine modification is found at Thr-42. Position 44 is a phosphoserine (Ser-44). The residue at position 47 (Thr-47) is a Phosphothreonine. Residues Ser-48 and Ser-52 each carry the phosphoserine modification. The segment covering Ala-63–Lys-74 has biased composition (basic and acidic residues). Ser-75 carries the phosphoserine; by PKC modification. At Ser-77 the chain carries Phosphoserine. Basic and acidic residues-rich tracts occupy residues Asp-95–Pro-111, Leu-141–Asn-155, Gly-163–Arg-178, and Pro-185–Ala-205. Position 103 is a phosphoserine; by PKC (Ser-103). Ser-169 carries the phosphoserine; by PKC modification. Phosphoserine is present on residues Ser-186 and Ser-203. Thr-206 carries the phosphothreonine modification. Ser-256 is subject to Phosphoserine. At Thr-259 the chain carries Phosphothreonine. Ser-263 carries the phosphoserine modification. Thr-269 carries the phosphothreonine modification. A helical; Signal-anchor for type II membrane protein transmembrane segment spans residues Ala-325 to Thr-346. Residues His-347–Asp-846 are Extracellular-facing. Residues Asn-410, Asn-417, and Asn-428 are each glycosylated (N-linked (GlcNAc...) asparagine). 2 disulfides stabilise this stretch: Cys-422-Cys-437 and Cys-600-Cys-605. 3 N-linked (GlcNAc...) asparagine glycosylation sites follow: Asn-636, Asn-691, and Asn-720. Residues Cys-738 and Cys-830 are joined by a disulfide bond.

The protein in the C-terminal section; belongs to the type-B carboxylesterase/lipase family. In terms of tissue distribution, late in embryogenesis, expression is restricted to cells of the peripheral and central nervous system undergoing proliferation and differentiation. Also expressed in larval CNS, mesoderm and imaginal disks.

Its subcellular location is the membrane. Its function is as follows. May mediate or modulate cell adhesion between embryonic cells during development. The protein is Neurotactin (Nrt) of Drosophila melanogaster (Fruit fly).